A 269-amino-acid chain; its full sequence is Proline-rich protein 7 (269 aa).

Residues 1–9 lie on the Extracellular side of the membrane; that stretch reads MVMSQGTYT. The interval 1–44 is required for interaction with NMDA receptors; sequence MVMSQGTYTFLTCFAGFWLIWGLIVLLCCFCSFLRRRLKRRQEE. The tract at residues 2-39 is required for membrane localization; sequence VMSQGTYTFLTCFAGFWLIWGLIVLLCCFCSFLRRRLK. Residues 10–30 traverse the membrane as a helical; Signal-anchor for type III membrane protein segment; it reads FLTCFAGFWLIWGLIVLLCCF. The Cytoplasmic portion of the chain corresponds to 31–269; sequence CSFLRRRLKR…IPLFGRTTAV (239 aa). A Phosphoserine modification is found at serine 64. Disordered regions lie at residues 64-83 and 98-128; these read SLAG…RSRL and LLHH…LSVP. Over residues 108–117 the composition is skewed to basic residues; that stretch reads AHPHPHHHAL. Over residues 118–128 the composition is skewed to pro residues; the sequence is PHPPPSHLSVP. Positions 146 to 166 are required for internalization; the sequence is PCYEEAVLMAEPPPPYSEVLT. The tract at residues 146 to 269 is required for apoptosis induction; sequence PCYEEAVLMA…IPLFGRTTAV (124 aa). The PDZ-binding signature appears at 267 to 269; sequence TAV.

In terms of assembly, forms a complex with NMDA receptor zeta subunit GRIN1 and epsilon subunit GRIN2B. Interacts with GRIN2B. Interacts with GRIN1; the interaction is reduced upon NMDA receptor activity. Found in a postsynaptic membrane complex with DLG4 and GRIN1. Interacts with DLG4 (via PDZ3 domain and to lesser degree via PDZ2 domain). Interacts with FBXW7. Found in a complex with JUN and FBXW7. Interacts with JUN and FBXW7; the interaction inhibits ubiquitination-mediated JUN degradation promoting its phosphorylation and transcriptional activity. Interacts with SRC. Post-translationally, palmitoylated. In terms of processing, tyrosine phosphorylated, possibly by SRC. In terms of tissue distribution, expressed in brain. Expressed in the cerebral cortex and especially in hippocampal neural cells (at protein level).

It is found in the cell membrane. The protein resides in the postsynaptic cell membrane. It localises to the postsynaptic density membrane. Its subcellular location is the cytoplasm. The protein localises to the perinuclear region. It is found in the synapse. The protein resides in the cell projection. It localises to the dendrite. Its subcellular location is the nucleus. Its function is as follows. Acts as a synapse-to-nucleus messenger to promote NMDA receptor-mediated excitotoxicity in neurons in a JUN-dependent manner. Inhibits ubiquitination-mediated degradation and promotes phosphorylation and transcriptional activity of transcription factor JUN. Might play a redundant role in the regulation of T cell receptor signaling. Might promote apoptosis in T cells. In Rattus norvegicus (Rat), this protein is Proline-rich protein 7 (Prr7).